Here is a 287-residue protein sequence, read N- to C-terminus: Bifunctional protein FolD (287 aa).

Residues 165–167 (GRG), threonine 192, and valine 233 each bind NADP(+).

Belongs to the tetrahydrofolate dehydrogenase/cyclohydrolase family. Homodimer.

It catalyses the reaction (6R)-5,10-methylene-5,6,7,8-tetrahydrofolate + NADP(+) = (6R)-5,10-methenyltetrahydrofolate + NADPH. The enzyme catalyses (6R)-5,10-methenyltetrahydrofolate + H2O = (6R)-10-formyltetrahydrofolate + H(+). Its pathway is one-carbon metabolism; tetrahydrofolate interconversion. Functionally, catalyzes the oxidation of 5,10-methylenetetrahydrofolate to 5,10-methenyltetrahydrofolate and then the hydrolysis of 5,10-methenyltetrahydrofolate to 10-formyltetrahydrofolate. The protein is Bifunctional protein FolD of Cutibacterium acnes (strain DSM 16379 / KPA171202) (Propionibacterium acnes).